Reading from the N-terminus, the 165-residue chain is Large ribosomal subunit protein uL11 (165 aa).

The residue at position 38 (Ser-38) is a Phosphoserine. Lys-40 participates in a covalent cross-link: Glycyl lysine isopeptide (Lys-Gly) (interchain with G-Cter in SUMO2). Lys-48 participates in a covalent cross-link: Glycyl lysine isopeptide (Lys-Gly) (interchain with G-Cter in ubiquitin). Position 54 is an N6-acetyllysine (Lys-54). A Glycyl lysine isopeptide (Lys-Gly) (interchain with G-Cter in ubiquitin) cross-link involves residue Lys-83. At Ser-165 the chain carries Phosphoserine.

The protein belongs to the universal ribosomal protein uL11 family. As to quaternary structure, component of the large ribosomal subunit. Mature ribosomes consist of a small (40S) and a large (60S) subunit. The 40S subunit contains about 33 different proteins and 1 molecule of RNA (18S). The 60S subunit contains about 49 different proteins and 3 molecules of RNA (28S, 5.8S and 5S). Post-translationally, ubiquitinated at Lys-48 and Lys-83 by RNF14 and RNF25 in response to ribosome collisions (ribosome stalling).

The protein localises to the cytoplasm. Its function is as follows. Component of the large ribosomal subunit. The ribosome is a large ribonucleoprotein complex responsible for the synthesis of proteins in the cell. Binds directly to 26S ribosomal RNA. This chain is Large ribosomal subunit protein uL11 (RPL12), found in Bos taurus (Bovine).